A 439-amino-acid polypeptide reads, in one-letter code: Methionine aminopeptidase 2-2 (439 aa).

Residues 1–90 (MAAQTTEKLD…RVPVSNLFPN (90 aa)) form a disordered region. The span at 28 to 41 (EAEEDSDDAQDEGA) shows a compositional bias: acidic residues. The span at 56-72 (KKKKKKKPKKKSKKKGG) shows a compositional bias: basic residues. H196 contributes to the substrate binding site. 3 residues coordinate a divalent metal cation: D216, D227, and H296. H304 lines the substrate pocket. The a divalent metal cation site is built by E329 and E424.

The protein belongs to the peptidase M24A family. Methionine aminopeptidase eukaryotic type 2 subfamily. The cofactor is Co(2+). Zn(2+) is required as a cofactor. It depends on Mn(2+) as a cofactor. Fe(2+) serves as cofactor.

It is found in the cytoplasm. The catalysed reaction is Release of N-terminal amino acids, preferentially methionine, from peptides and arylamides.. In terms of biological role, cotranslationally removes the N-terminal methionine from nascent proteins. The N-terminal methionine is often cleaved when the second residue in the primary sequence is small and uncharged (Met-Ala-, Cys, Gly, Pro, Ser, Thr, or Val). This is Methionine aminopeptidase 2-2 from Penicillium rubens (strain ATCC 28089 / DSM 1075 / NRRL 1951 / Wisconsin 54-1255) (Penicillium chrysogenum).